A 639-amino-acid chain; its full sequence is UvrABC system protein C (639 aa).

Acidic residues predominate over residues 1-16 (MTDLPVDEPDRDDGAD). Residues 1–28 (MTDLPVDEPDRDDGADQPDAGADPATPR) form a disordered region. Positions 17–27 (QPDAGADPATP) are enriched in low complexity. Positions 42–120 (SSPGVYRMID…IKKLKPRYNI (79 aa)) constitute a GIY-YIG domain. The UVR domain occupies 230 to 265 (KALQHDLAKRMDEAAQALDYEQAAIFRDRIKALTNV).

It belongs to the UvrC family. As to quaternary structure, interacts with UvrB in an incision complex.

The protein resides in the cytoplasm. Functionally, the UvrABC repair system catalyzes the recognition and processing of DNA lesions. UvrC both incises the 5' and 3' sides of the lesion. The N-terminal half is responsible for the 3' incision and the C-terminal half is responsible for the 5' incision. This is UvrABC system protein C from Rhodospirillum rubrum (strain ATCC 11170 / ATH 1.1.1 / DSM 467 / LMG 4362 / NCIMB 8255 / S1).